A 311-amino-acid polypeptide reads, in one-letter code: Ornithine carbamoyltransferase (311 aa).

Residues serine 56–threonine 59, glutamine 83, arginine 107, and histidine 134–glutamine 137 contribute to the carbamoyl phosphate site. Residues asparagine 166, aspartate 230, and serine 234–methionine 235 contribute to the L-ornithine site. Residues cysteine 270–leucine 271 and lysine 298 each bind carbamoyl phosphate.

It belongs to the aspartate/ornithine carbamoyltransferase superfamily. OTCase family.

The protein resides in the cytoplasm. The enzyme catalyses carbamoyl phosphate + L-ornithine = L-citrulline + phosphate + H(+). It functions in the pathway amino-acid degradation; L-arginine degradation via ADI pathway; carbamoyl phosphate from L-arginine: step 2/2. Its function is as follows. Reversibly catalyzes the transfer of the carbamoyl group from carbamoyl phosphate (CP) to the N(epsilon) atom of ornithine (ORN) to produce L-citrulline. The sequence is that of Ornithine carbamoyltransferase from Ignicoccus hospitalis (strain KIN4/I / DSM 18386 / JCM 14125).